The chain runs to 281 residues: L-ornithine N(alpha)-acyltransferase (281 aa).

The protein belongs to the acetyltransferase family. OlsB subfamily.

The enzyme catalyses a (3R)-hydroxyacyl-[ACP] + L-ornithine = a lyso-ornithine lipid + holo-[ACP] + H(+). Its pathway is lipid metabolism. In terms of biological role, catalyzes the first step in the biosynthesis of ornithine lipids, which are phosphorus-free membrane lipids. Catalyzes the 3-hydroxyacyl-acyl carrier protein-dependent acylation of ornithine to form lyso-ornithine lipid (LOL). The sequence is that of L-ornithine N(alpha)-acyltransferase from Brucella abortus (strain 2308).